We begin with the raw amino-acid sequence, 89 residues long: Small ribosomal subunit protein uS15 (89 aa).

This sequence belongs to the universal ribosomal protein uS15 family. Part of the 30S ribosomal subunit. Forms a bridge to the 50S subunit in the 70S ribosome, contacting the 23S rRNA.

Functionally, one of the primary rRNA binding proteins, it binds directly to 16S rRNA where it helps nucleate assembly of the platform of the 30S subunit by binding and bridging several RNA helices of the 16S rRNA. Forms an intersubunit bridge (bridge B4) with the 23S rRNA of the 50S subunit in the ribosome. This Neisseria gonorrhoeae (strain ATCC 700825 / FA 1090) protein is Small ribosomal subunit protein uS15.